Reading from the N-terminus, the 307-residue chain is Ribosomal RNA small subunit methyltransferase H (307 aa).

S-adenosyl-L-methionine contacts are provided by residues 33 to 35, aspartate 51, phenylalanine 82, aspartate 96, and glutamine 103; that span reads GGY.

Belongs to the methyltransferase superfamily. RsmH family.

The protein resides in the cytoplasm. It carries out the reaction cytidine(1402) in 16S rRNA + S-adenosyl-L-methionine = N(4)-methylcytidine(1402) in 16S rRNA + S-adenosyl-L-homocysteine + H(+). Its function is as follows. Specifically methylates the N4 position of cytidine in position 1402 (C1402) of 16S rRNA. This chain is Ribosomal RNA small subunit methyltransferase H, found in Rickettsia rickettsii (strain Iowa).